The chain runs to 278 residues: Digeranylgeranylglyceryl phosphate synthase (278 aa).

7 helical membrane passes run 12 to 32 (LKNC…ASNF), 34 to 54 (FGAL…CGFG), 92 to 112 (IMIF…MAVL), 129 to 149 (IIGN…GGIA), 199 to 219 (IYIS…PYLT), 221 to 241 (IFGI…LAGF), and 257 to 277 (SKNI…GSIF).

It belongs to the UbiA prenyltransferase family. DGGGP synthase subfamily. It depends on Mg(2+) as a cofactor.

The protein resides in the cell membrane. It catalyses the reaction sn-3-O-(geranylgeranyl)glycerol 1-phosphate + (2E,6E,10E)-geranylgeranyl diphosphate = 2,3-bis-O-(geranylgeranyl)-sn-glycerol 1-phosphate + diphosphate. It participates in membrane lipid metabolism; glycerophospholipid metabolism. Prenyltransferase that catalyzes the transfer of the geranylgeranyl moiety of geranylgeranyl diphosphate (GGPP) to the C2 hydroxyl of (S)-3-O-geranylgeranylglyceryl phosphate (GGGP). This reaction is the second ether-bond-formation step in the biosynthesis of archaeal membrane lipids. In Methanococcus vannielii (strain ATCC 35089 / DSM 1224 / JCM 13029 / OCM 148 / SB), this protein is Digeranylgeranylglyceryl phosphate synthase.